Reading from the N-terminus, the 166-residue chain is NAD(P)H-quinone oxidoreductase subunit I, chloroplastic (166 aa).

4Fe-4S ferredoxin-type domains follow at residues 55 to 84 (GRIH…VDWK) and 95 to 124 (LNYS…MTEE). 8 residues coordinate [4Fe-4S] cluster: Cys64, Cys67, Cys70, Cys74, Cys104, Cys107, Cys110, and Cys114.

Belongs to the complex I 23 kDa subunit family. In terms of assembly, NDH is composed of at least 16 different subunits, 5 of which are encoded in the nucleus. The cofactor is [4Fe-4S] cluster.

It localises to the plastid. Its subcellular location is the chloroplast thylakoid membrane. The catalysed reaction is a plastoquinone + NADH + (n+1) H(+)(in) = a plastoquinol + NAD(+) + n H(+)(out). It carries out the reaction a plastoquinone + NADPH + (n+1) H(+)(in) = a plastoquinol + NADP(+) + n H(+)(out). Functionally, NDH shuttles electrons from NAD(P)H:plastoquinone, via FMN and iron-sulfur (Fe-S) centers, to quinones in the photosynthetic chain and possibly in a chloroplast respiratory chain. The immediate electron acceptor for the enzyme in this species is believed to be plastoquinone. Couples the redox reaction to proton translocation, and thus conserves the redox energy in a proton gradient. In Rensonia salvadorica, this protein is NAD(P)H-quinone oxidoreductase subunit I, chloroplastic.